Reading from the N-terminus, the 236-residue chain is MEADVQRAQQAQLEKGSSVPPWTGIPLQKGLGQRLRQHVNPLQAQYQQPTPPPHWERVYRRLGQPLHLDIGSGSGRFLLRMAQEQPDWNFLGVEIRQPLVERANAWRDELGLDNVHFLFANINVSLRHLFAPGDLSRVTIQFPDPWFKKRHHKRRIVQPRLVADLALLLQPGSPVFLQSDVREVAEEMVDRFLEHPQFWNPYQGPIDDNPFGIPTEREWQCLQLGLPIYRYWLERR.

The interval 1–23 (MEADVQRAQQAQLEKGSSVPPWT) is disordered. 4 residues coordinate S-adenosyl-L-methionine: Asp69, Glu94, Asn121, and Asp144. Asp144 is a catalytic residue. Positions 148 and 180 each coordinate substrate.

This sequence belongs to the class I-like SAM-binding methyltransferase superfamily. TrmB family.

It carries out the reaction guanosine(46) in tRNA + S-adenosyl-L-methionine = N(7)-methylguanosine(46) in tRNA + S-adenosyl-L-homocysteine. It functions in the pathway tRNA modification; N(7)-methylguanine-tRNA biosynthesis. Catalyzes the formation of N(7)-methylguanine at position 46 (m7G46) in tRNA. In Synechococcus sp. (strain JA-3-3Ab) (Cyanobacteria bacterium Yellowstone A-Prime), this protein is tRNA (guanine-N(7)-)-methyltransferase.